Consider the following 104-residue polypeptide: MRIKNKIKKRIIELIELAYITARKGDLELAREYIKLAEMYSRKGRIKIPLKYKRMFCRKCYTPLITGVTERRRIRSKILIRTCLICNWQRRYVLSRNKGSNKEN.

Cys57, Cys60, Cys83, and Cys86 together coordinate Zn(2+).

This sequence belongs to the eukaryotic/archaeal RNase P protein component 4 family. Consists of a catalytic RNA component and at least 4-5 protein subunits. It depends on Zn(2+) as a cofactor.

It localises to the cytoplasm. It catalyses the reaction Endonucleolytic cleavage of RNA, removing 5'-extranucleotides from tRNA precursor.. In terms of biological role, part of ribonuclease P, a protein complex that generates mature tRNA molecules by cleaving their 5'-ends. In Saccharolobus islandicus (strain L.S.2.15 / Lassen #1) (Sulfolobus islandicus), this protein is Ribonuclease P protein component 4.